Reading from the N-terminus, the 101-residue chain is Anti-sigma factor RshA (101 aa).

The inhibits SigH sigma factor activity stretch occupies residues 9 to 15; sequence DAHADHD. C23 serves as a coordination point for iron-sulfur cluster. 2 inhibits SigH sigma factor activity regions span residues 28-34 and 38-44; these read AEVWTLL and CTPETRE. H49, C53, and C56 together coordinate iron-sulfur cluster. T94 is subject to Phosphothreonine.

The protein belongs to the zinc-associated anti-sigma factor (ZAS) superfamily. Interacts with cognate sigma factor SigH under reducing conditions. Binding inhibits the interaction of SigH with the RNA polymerase catalytic core. The cofactor is iron-sulfur cluster. In terms of processing, phosphorylated, probably by PknB. Phosphorylation decreases interaction with SigH, leading to increased SigH-mediated transcription.

Its function is as follows. An redox-regulated anti-sigma factor for extracytoplasmic function (ECF) sigma factor SigH. ECF sigma factors are held in an inactive form by a cognate anti-sigma factor. RshA and some peptides derived from it inhibit the sigma factor activity of SigH. Probably releases SigH during oxidative stress. This chain is Anti-sigma factor RshA (rshA), found in Mycobacterium tuberculosis (strain CDC 1551 / Oshkosh).